The chain runs to 467 residues: Asparagine--tRNA ligase (467 aa).

This sequence belongs to the class-II aminoacyl-tRNA synthetase family. As to quaternary structure, homodimer.

The protein localises to the cytoplasm. It carries out the reaction tRNA(Asn) + L-asparagine + ATP = L-asparaginyl-tRNA(Asn) + AMP + diphosphate + H(+). In Haemophilus influenzae (strain ATCC 51907 / DSM 11121 / KW20 / Rd), this protein is Asparagine--tRNA ligase.